The primary structure comprises 112 residues: Nitrogen regulatory protein P-II (112 aa).

Tyrosine 51 bears the O-UMP-tyrosine mark.

The protein belongs to the P(II) protein family. As to quaternary structure, homotrimer.

In terms of biological role, in nitrogen-limiting conditions, when the ratio of Gln to 2-ketoglutarate decreases, P-II is uridylylated to P-II-UMP. P-II-UMP allows the deadenylation of glutamine synthetase (GS), thus activating the enzyme. Conversely, in nitrogen excess P-II is deuridylated and promotes the adenylation of GS. P-II indirectly controls the transcription of the GS gene (glnA). P-II prevents NR-II-catalyzed conversion of NR-I to NR-I-phosphate, the transcriptional activator of glnA. When P-II is uridylylated to P-II-UMP, these events are reversed. This chain is Nitrogen regulatory protein P-II (glnB), found in Mycobacterium bovis (strain ATCC BAA-935 / AF2122/97).